Here is a 414-residue protein sequence, read N- to C-terminus: GPI mannosyltransferase 1 (414 aa).

10 helical membrane passes run 6–26, 87–107, 119–139, 149–171, 183–203, 213–233, 282–302, 316–336, 356–376, and 387–407; these read ISHI…FGLY, YIFM…LSGI, IIML…STRG, IMLS…WLGL, LPSI…VPIV, FLIT…SIYG, MEKF…PLLF, FAFV…FLIF, IVAL…AYQL, and GLLF…SVFI.

The protein belongs to the PIGM family.

Its subcellular location is the endoplasmic reticulum membrane. Its pathway is glycolipid biosynthesis; glycosylphosphatidylinositol-anchor biosynthesis. Mannosyltransferase involved in glycosylphosphatidylinositol-anchor biosynthesis. Transfers the first alpha-1,4-mannose to GlcN-acyl-PI during GPI precursor assembly. Required for cell wall integrity. The polypeptide is GPI mannosyltransferase 1 (GPI14) (Debaryomyces hansenii (strain ATCC 36239 / CBS 767 / BCRC 21394 / JCM 1990 / NBRC 0083 / IGC 2968) (Yeast)).